Reading from the N-terminus, the 298-residue chain is Putative S-adenosyl-L-methionine-dependent methyltransferase MAV_0778 (298 aa).

S-adenosyl-L-methionine contacts are provided by residues aspartate 124 and 153-154 (DL).

It belongs to the UPF0677 family.

Functionally, exhibits S-adenosyl-L-methionine-dependent methyltransferase activity. The polypeptide is Putative S-adenosyl-L-methionine-dependent methyltransferase MAV_0778 (Mycobacterium avium (strain 104)).